The chain runs to 35 residues: Photosystem II reaction center protein T (35 aa).

The chain crosses the membrane as a helical span at residues 3–23; it reads ALVYTFLLVSTLGIIFFAIFF.

Belongs to the PsbT family. PSII is composed of 1 copy each of membrane proteins PsbA, PsbB, PsbC, PsbD, PsbE, PsbF, PsbH, PsbI, PsbJ, PsbK, PsbL, PsbM, PsbT, PsbY, PsbZ, Psb30/Ycf12, at least 3 peripheral proteins of the oxygen-evolving complex and a large number of cofactors. It forms dimeric complexes.

Its subcellular location is the plastid. The protein resides in the chloroplast thylakoid membrane. Functionally, found at the monomer-monomer interface of the photosystem II (PS II) dimer, plays a role in assembly and dimerization of PSII. PSII is a light-driven water plastoquinone oxidoreductase, using light energy to abstract electrons from H(2)O, generating a proton gradient subsequently used for ATP formation. This Ceratophyllum demersum (Rigid hornwort) protein is Photosystem II reaction center protein T.